The following is a 483-amino-acid chain: Trigger factor (483 aa).

Residues 166-251 enclose the PPIase FKBP-type domain; that stretch reads TDTVNIDYVG…INDVFTKEKP (86 aa). Over residues 435–460 the composition is skewed to basic and acidic residues; sequence GEEPKLSTTKKVVEPTEEKTRKDSKM. The interval 435–483 is disordered; sequence GEEPKLSTTKKVVEPTEEKTRKDSKMSTKKPAAKPAAKPAAATKKPVKK. Positions 467-483 are enriched in low complexity; it reads AKPAAKPAAATKKPVKK.

This sequence belongs to the FKBP-type PPIase family. Tig subfamily.

Its subcellular location is the cytoplasm. It carries out the reaction [protein]-peptidylproline (omega=180) = [protein]-peptidylproline (omega=0). Functionally, involved in protein export. Acts as a chaperone by maintaining the newly synthesized protein in an open conformation. Functions as a peptidyl-prolyl cis-trans isomerase. The polypeptide is Trigger factor (Mycoplasma mobile (strain ATCC 43663 / 163K / NCTC 11711) (Mesomycoplasma mobile)).